Consider the following 159-residue polypeptide: Large ribosomal subunit protein uL15 (159 aa).

Over residues 21–34 (LRPAPGAHKSKIRV) the composition is skewed to basic residues. A disordered region spans residues 21-55 (LRPAPGAHKSKIRVGRGEGSKGKTAGRGTKGSKAR).

The protein belongs to the universal ribosomal protein uL15 family. Part of the 50S ribosomal subunit.

In terms of biological role, binds to the 23S rRNA. The chain is Large ribosomal subunit protein uL15 from Frankia casuarinae (strain DSM 45818 / CECT 9043 / HFP020203 / CcI3).